We begin with the raw amino-acid sequence, 310 residues long: Tagatose-6-phosphate kinase (310 aa).

It belongs to the carbohydrate kinase PfkB family. LacC subfamily.

The catalysed reaction is D-tagatofuranose 6-phosphate + ATP = D-tagatofuranose 1,6-bisphosphate + ADP + H(+). The protein operates within carbohydrate metabolism; D-tagatose 6-phosphate degradation; D-glyceraldehyde 3-phosphate and glycerone phosphate from D-tagatose 6-phosphate: step 1/2. In Staphylococcus aureus (strain Mu3 / ATCC 700698), this protein is Tagatose-6-phosphate kinase.